Consider the following 81-residue polypeptide: MSFRFVCLILWLLLCASSLAIYFALQPCPGFIVTTLACLLLFQLAYFGSVLLLVCLAAIAQLSARLRIFGIFSENRNHSSK.

In terms of biological role, increases exopolysaccharide abundance. The sequence is that of Protein SyrA (syrA) from Rhizobium meliloti (strain 1021) (Ensifer meliloti).